The primary structure comprises 131 residues: Classical arabinogalactan protein 2 (131 aa).

An N-terminal signal peptide occupies residues 1–21 (MNSKAMQALIFLGFLATSCLA). The residue at position 22 (Gln-22) is a Pyrrolidone carboxylic acid. A 4-hydroxyproline mark is found at Pro-24, Pro-26, Pro-28, Pro-34, and Pro-35. Residues Pro-24, Pro-26, Pro-28, Pro-34, and Pro-35 are each glycosylated (O-linked (Ara...) hydroxyproline). The interval 24 to 106 (PAPAPTTVTP…PGPDGAADAP (83 aa)) is disordered. 2 stretches are compositionally biased toward pro residues: residues 25-38 (APAPTTVTPPPTAL) and 49-64 (IASPPVPVNEPTPAPT). 2 stretches are compositionally biased toward low complexity: residues 65 to 76 (TSPTTSPVASPP) and 90 to 106 (TPTSSPAPGPDGAADAP). Ser-107 carries the GPI-anchor amidated serine lipid modification. The propeptide at 108 to 131 (AAWANKAFLVGTAVAGALYAVVLA) is removed in mature form.

The protein belongs to the classical AGP family. O-glycosylated on hydroxyprolines; noncontiguous hydroxylproline residues are glycosylated with arabinogalactan.

Its subcellular location is the cell membrane. Proteoglycan that seems to be implicated in diverse developmental roles such as differentiation, cell-cell recognition, embryogenesis and programmed cell death. This is Classical arabinogalactan protein 2 (AGP2) from Arabidopsis thaliana (Mouse-ear cress).